Consider the following 157-residue polypeptide: 6,7-dimethyl-8-ribityllumazine synthase (157 aa).

Residues Phe24, 56–58 (SFE), and 79–81 (VLI) each bind 5-amino-6-(D-ribitylamino)uracil. Residue 84–85 (ET) participates in (2S)-2-hydroxy-3-oxobutyl phosphate binding. His87 (proton donor) is an active-site residue. Phe112 lines the 5-amino-6-(D-ribitylamino)uracil pocket. A (2S)-2-hydroxy-3-oxobutyl phosphate-binding site is contributed by Arg126.

Belongs to the DMRL synthase family.

The catalysed reaction is (2S)-2-hydroxy-3-oxobutyl phosphate + 5-amino-6-(D-ribitylamino)uracil = 6,7-dimethyl-8-(1-D-ribityl)lumazine + phosphate + 2 H2O + H(+). The protein operates within cofactor biosynthesis; riboflavin biosynthesis; riboflavin from 2-hydroxy-3-oxobutyl phosphate and 5-amino-6-(D-ribitylamino)uracil: step 1/2. Functionally, catalyzes the formation of 6,7-dimethyl-8-ribityllumazine by condensation of 5-amino-6-(D-ribitylamino)uracil with 3,4-dihydroxy-2-butanone 4-phosphate. This is the penultimate step in the biosynthesis of riboflavin. In Pyrococcus furiosus (strain ATCC 43587 / DSM 3638 / JCM 8422 / Vc1), this protein is 6,7-dimethyl-8-ribityllumazine synthase.